We begin with the raw amino-acid sequence, 287 residues long: uncharacterized protein (287 aa).

7 helical membrane passes run 27–47 (LTFS…FGVQ), 66–86 (LGTI…VTAF), 97–117 (WFWG…GVLL), 135–155 (IVFA…LSAL), 171–191 (IFIW…VLNF), 205–225 (LFPG…VYFV), and 254–274 (SALF…YFIL).

Its subcellular location is the cell membrane. This is an uncharacterized protein from Mycoplasma pneumoniae (strain ATCC 29342 / M129 / Subtype 1) (Mycoplasmoides pneumoniae).